We begin with the raw amino-acid sequence, 342 residues long: RNA 3'-terminal phosphate cyclase (342 aa).

ATP contacts are provided by residues Gln-102 and 283–287 (HLADQ). Catalysis depends on His-308, which acts as the Tele-AMP-histidine intermediate.

The protein belongs to the RNA 3'-terminal cyclase family. Type 1 subfamily.

The protein resides in the cytoplasm. The enzyme catalyses a 3'-end 3'-phospho-ribonucleotide-RNA + ATP = a 3'-end 2',3'-cyclophospho-ribonucleotide-RNA + AMP + diphosphate. In terms of biological role, catalyzes the conversion of 3'-phosphate to a 2',3'-cyclic phosphodiester at the end of RNA. The mechanism of action of the enzyme occurs in 3 steps: (A) adenylation of the enzyme by ATP; (B) transfer of adenylate to an RNA-N3'P to produce RNA-N3'PP5'A; (C) and attack of the adjacent 2'-hydroxyl on the 3'-phosphorus in the diester linkage to produce the cyclic end product. The biological role of this enzyme is unknown but it is likely to function in some aspects of cellular RNA processing. This is RNA 3'-terminal phosphate cyclase from Pseudomonas fluorescens (strain ATCC BAA-477 / NRRL B-23932 / Pf-5).